Here is a 343-residue protein sequence, read N- to C-terminus: Cathepsin Q (343 aa).

The signal sequence occupies residues 1-20; sequence MTPAVFLVILCLGVVPGASA. Residues 21–124 constitute a propeptide, activation peptide; sequence LDLSLDVQWQ…FPNSWNWRDA (104 aa). Cystine bridges form between cysteine 146–cysteine 189 and cysteine 180–cysteine 222. Cysteine 149 is an active-site residue. Residue asparagine 228 is glycosylated (N-linked (GlcNAc...) asparagine). A disulfide bond links cysteine 280 and cysteine 332. The active site involves histidine 286. Asparagine 298 carries N-linked (GlcNAc...) asparagine glycosylation. Residue asparagine 310 is part of the active site.

The protein belongs to the peptidase C1 family. In terms of tissue distribution, highly expressed in placenta.

It localises to the lysosome. The polypeptide is Cathepsin Q (Ctsq) (Rattus norvegicus (Rat)).